We begin with the raw amino-acid sequence, 173 residues long: Alpha-crystallin A chain (173 aa).

An N-acetylmethionine modification is found at M1. The segment at 1-63 (MDVTIQHPWF…RTVLDSGISE (63 aa)) is required for complex formation with BFSP1 and BFSP2. At Q6 the chain carries Deamidated glutamine; partial. S45 is subject to Phosphoserine. The residue at position 50 (Q50) is a Deamidated glutamine; partial. The sHSP domain maps to 52–162 (LFRTVLDSGI…GHSERAIPVS (111 aa)). K70 carries the post-translational modification N6-acetyllysine. Q90 is subject to Deamidated glutamine; partial. K99 is modified (N6-acetyllysine). H100 is a Zn(2+) binding site. Residue N101 is modified to Deamidated asparagine; partial. E102 and H107 together coordinate Zn(2+). S122 bears the Phosphoserine mark. Residue N123 is modified to Deamidated asparagine; partial. The disordered stretch occupies residues 145–173 (KVQSGLDAGHSERAIPVSREEKPSSAPSS). The residue at position 147 (Q147) is a Deamidated glutamine; partial. Positions 153–167 (GHSERAIPVSREEKP) are enriched in basic and acidic residues. H154 provides a ligand contact to Zn(2+). An O-linked (GlcNAc) serine glycan is attached at S162.

It belongs to the small heat shock protein (HSP20) family. As to quaternary structure, heteromer composed of three CRYAA and one CRYAB subunits. Inter-subunit bridging via zinc ions enhances stability, which is crucial as there is no protein turn over in the lens. Can also form homodimers and homotetramers (dimers of dimers) which serve as the building blocks of homooligomers. Within homooligomers, the zinc-binding motif is created from residues of 3 different molecules. His-100 and Glu-102 from one molecule are ligands of the zinc ion, and His-107 and His-154 residues from additional molecules complete the site with tetrahedral coordination geometry. Part of a complex required for lens intermediate filament formation composed of BFSP1, BFSP2 and CRYAA. Post-translationally, acetylation at Lys-70 may increase chaperone activity. In terms of processing, undergoes age-dependent proteolytical cleavage at the C-terminus.

The protein resides in the cytoplasm. Its subcellular location is the nucleus. Functionally, contributes to the transparency and refractive index of the lens. Acts as a chaperone, preventing aggregation of various proteins under a wide range of stress conditions. Required for the correct formation of lens intermediate filaments as part of a complex composed of BFSP1, BFSP2 and CRYAA. This chain is Alpha-crystallin A chain (CRYAA), found in Cavia porcellus (Guinea pig).